The following is a 2377-amino-acid chain: DNA (cytosine-5-)-methyltransferase DMT5 (2377 aa).

The tract at residues 24–56 (GTADGAVNGGNIPNSQSQKRKRASPSPEIESEE) is disordered. Residues 62–126 (YEIDYIADSR…KNPGKPRLSP (65 aa)) enclose the Chromo; shadow subtype domain. A disordered region spans residues 150–282 (GKSRAASSTD…KSSLPKAKLR (133 aa)). The segment covering 201–213 (PTSKKVHPNKKCK) has biased composition (basic residues). 2 stretches are compositionally biased toward acidic residues: residues 217 to 238 (DDES…DDND) and 245 to 263 (EDDE…ESDE). A compositionally biased stretch (basic residues) spans 268–282 (PAKKTKSSLPKAKLR). The SAM-dependent MTase C5-type domain maps to 347 to 753 (LRVATMCSGT…IAALKVACHK (407 aa)). Residue Cys-440 is part of the active site. The region spanning 1450–1771 (AERPVMVRGG…RSIATFMGIH (322 aa)) is the Helicase ATP-binding domain. 1463-1470 (DQVGYGKT) contacts ATP. Disordered stretches follow at residues 1642 to 1680 (KGQA…ENSK), 2313 to 2334 (KGRG…TVKS), and 2347 to 2377 (SSFR…SDII). Residues 1645–1669 (AYRDKHDSDSKAKPITKEELERWEA) are compositionally biased toward basic and acidic residues. A Helicase C-terminal domain is found at 2152 to 2315 (KLEHLVNLIH…EIPQEEYKGR (164 aa)). Over residues 2317 to 2334 (SSISMTNEKRTPTLTVKS) the composition is skewed to polar residues. The segment covering 2363-2377 (GVSDDDENSELSDII) has biased composition (acidic residues).

This sequence in the N-terminal section; belongs to the class I-like SAM-binding methyltransferase superfamily. C5-methyltransferase family. It in the C-terminal section; belongs to the SNF2/RAD54 helicase family. As to quaternary structure, interacts with SWI6. Mg(2+) serves as cofactor.

It is found in the nucleus. The protein localises to the chromosome. The enzyme catalyses a 2'-deoxycytidine in DNA + S-adenosyl-L-methionine + ATP + H2O = a 5-methyl-2'-deoxycytidine in DNA + S-adenosyl-L-homocysteine + ADP + phosphate + 2 H(+). Its activity is regulated as follows. Hemimethylated DNA substrates stimulate ATP hydrolysis and this is a prerequisite for methyltransferase activity. Its function is as follows. ATP-dependent cytosine methylase that maintains DNA methylation by acting at hemimethylated palindromic 5'-CG-3' sites to produce symmetrically methylated DNA strands. DNA methylation may play a role in transcriptional silencing, particularly at transposable elements. This Cryptococcus neoformans var. grubii serotype A (strain H99 / ATCC 208821 / CBS 10515 / FGSC 9487) (Filobasidiella neoformans var. grubii) protein is DNA (cytosine-5-)-methyltransferase DMT5.